The chain runs to 100 residues: Co-chaperonin GroES (100 aa).

This sequence belongs to the GroES chaperonin family. In terms of assembly, heptamer of 7 subunits arranged in a ring. Interacts with the chaperonin GroEL.

It is found in the cytoplasm. Its function is as follows. Together with the chaperonin GroEL, plays an essential role in assisting protein folding. The GroEL-GroES system forms a nano-cage that allows encapsulation of the non-native substrate proteins and provides a physical environment optimized to promote and accelerate protein folding. GroES binds to the apical surface of the GroEL ring, thereby capping the opening of the GroEL channel. This chain is Co-chaperonin GroES, found in Mycobacterium tuberculosis (strain CDC 1551 / Oshkosh).